The following is a 215-amino-acid chain: Thymidylate kinase (215 aa).

7-14 (GLDGSGKT) lines the ATP pocket.

Belongs to the thymidylate kinase family.

The catalysed reaction is dTMP + ATP = dTDP + ADP. In terms of biological role, phosphorylation of dTMP to form dTDP in both de novo and salvage pathways of dTTP synthesis. The sequence is that of Thymidylate kinase from Mycoplasmopsis agalactiae (strain NCTC 10123 / CIP 59.7 / PG2) (Mycoplasma agalactiae).